Consider the following 38-residue polypeptide: MSGPNPNKQPVELNRTSLFWGLLLIFVLAVLFSSYFFN.

A helical transmembrane segment spans residues 17–37 (SLFWGLLLIFVLAVLFSSYFF).

This sequence belongs to the PsbL family. As to quaternary structure, PSII is composed of 1 copy each of membrane proteins PsbA, PsbB, PsbC, PsbD, PsbE, PsbF, PsbH, PsbI, PsbJ, PsbK, PsbL, PsbM, PsbT, PsbX, PsbY, PsbZ, Psb30/Ycf12, at least 3 peripheral proteins of the oxygen-evolving complex and a large number of cofactors. It forms dimeric complexes.

The protein localises to the plastid. It localises to the chloroplast thylakoid membrane. In terms of biological role, one of the components of the core complex of photosystem II (PSII). PSII is a light-driven water:plastoquinone oxidoreductase that uses light energy to abstract electrons from H(2)O, generating O(2) and a proton gradient subsequently used for ATP formation. It consists of a core antenna complex that captures photons, and an electron transfer chain that converts photonic excitation into a charge separation. This subunit is found at the monomer-monomer interface and is required for correct PSII assembly and/or dimerization. This Rhodomonas salina (Cryptomonas salina) protein is Photosystem II reaction center protein L.